A 401-amino-acid polypeptide reads, in one-letter code: Palmitoyltransferase PFA3 (401 aa).

The Cytoplasmic portion of the chain corresponds to 1 to 20; it reads MQCRKCCFACEKWCFIGAKA. A helical transmembrane segment spans residues 21–41; it reads FLPLVVNFLIIWACWVHAWLV. The Lumenal segment spans residues 42–56; it reads CWEPQLFESDTTFWR. The helical transmembrane segment at 57 to 77 threads the bilayer; sequence VYGVAGVAIGIMCNVLYLKVC. The Cytoplasmic portion of the chain corresponds to 78–171; that stretch reads KVGPGSPTDI…TAIGFHNHKY (94 aa). Residues 127-177 enclose the DHHC domain; it reads RFCTKCIGWKPDRSHHCSNYKRCVLKFDHYCPWFATAIGFHNHKYFVLFLW. The active-site S-palmitoyl cysteine intermediate is the C157. Residues 172–192 traverse the membrane as a helical segment; the sequence is FVLFLWYVTILCFFCLGSTGF. The Lumenal segment spans residues 193–220; sequence VFYNHILEIGAMRGPDGNTDYVGAISVN. The helical transmembrane segment at 221 to 241 threads the bilayer; it reads VMILMVLALVFAIAVGTFATF. Residues 242-401 are Cytoplasmic-facing; that stretch reads SLYLVFNNQS…INMVNKNNTK (160 aa). Residues 351-367 show a composition bias toward low complexity; it reads QQRQQQQKRTQYDLPQH. The tract at residues 351–401 is disordered; sequence QQRQQQQKRTQYDLPQHLQPPPQEHYEYDDEAQDSGDDIPLINMVNKNNTK. The span at 377–387 shows a compositional bias: acidic residues; the sequence is EYDDEAQDSGD.

It belongs to the DHHC palmitoyltransferase family. PFA3 subfamily.

The protein resides in the vacuole membrane. The enzyme catalyses L-cysteinyl-[protein] + hexadecanoyl-CoA = S-hexadecanoyl-L-cysteinyl-[protein] + CoA. In terms of biological role, palmitoyltransferase specific for VAC8. Palmitoylates VAC8 at one or more of its N-terminal cysteine residues, which is required for its proper membrane localization. The protein is Palmitoyltransferase PFA3 (PFA3) of Yarrowia lipolytica (strain CLIB 122 / E 150) (Yeast).